Consider the following 1228-residue polypeptide: S-layer protein (1228 aa).

The signal sequence occupies residues methionine 1–alanine 30.

It is found in the secreted. Its subcellular location is the cell wall. The protein resides in the S-layer. The S-layer is a paracrystalline mono-layered assembly of proteins which coat the surface of bacteria. The sequence is that of S-layer protein (sbsA) from Geobacillus stearothermophilus (Bacillus stearothermophilus).